A 133-amino-acid chain; its full sequence is ATP synthase epsilon chain, chloroplastic (133 aa).

This sequence belongs to the ATPase epsilon chain family. As to quaternary structure, F-type ATPases have 2 components, CF(1) - the catalytic core - and CF(0) - the membrane proton channel. CF(1) has five subunits: alpha(3), beta(3), gamma(1), delta(1), epsilon(1). CF(0) has three main subunits: a, b and c.

It localises to the plastid. The protein localises to the chloroplast thylakoid membrane. In terms of biological role, produces ATP from ADP in the presence of a proton gradient across the membrane. The chain is ATP synthase epsilon chain, chloroplastic from Trieres chinensis (Marine centric diatom).